A 152-amino-acid polypeptide reads, in one-letter code: Superoxide dismutase [Cu-Zn] 2 (152 aa).

The Cu cation site is built by H45, H47, and H62. C56 and C145 form a disulfide bridge. Zn(2+) contacts are provided by H62, H70, H79, and D82. H119 provides a ligand contact to Cu cation.

It belongs to the Cu-Zn superoxide dismutase family. As to quaternary structure, homodimer. Cu cation is required as a cofactor. The cofactor is Zn(2+).

It localises to the cytoplasm. It carries out the reaction 2 superoxide + 2 H(+) = H2O2 + O2. Destroys radicals which are normally produced within the cells and which are toxic to biological systems. The protein is Superoxide dismutase [Cu-Zn] 2 (SODCC2) of Oryza sativa subsp. japonica (Rice).